The primary structure comprises 258 residues: UDP-N-acetylenolpyruvoylglucosamine reductase (258 aa).

The active site involves Arg142. Ser184 acts as the Proton donor in catalysis. Glu254 is a catalytic residue.

This sequence belongs to the MurB family. Requires FAD as cofactor.

The protein localises to the cytoplasm. It carries out the reaction UDP-N-acetyl-alpha-D-muramate + NADP(+) = UDP-N-acetyl-3-O-(1-carboxyvinyl)-alpha-D-glucosamine + NADPH + H(+). The protein operates within cell wall biogenesis; peptidoglycan biosynthesis. Functionally, cell wall formation. The polypeptide is UDP-N-acetylenolpyruvoylglucosamine reductase (Campylobacter jejuni subsp. jejuni serotype O:2 (strain ATCC 700819 / NCTC 11168)).